Reading from the N-terminus, the 401-residue chain is Acetate kinase (401 aa).

Residue Asn7 coordinates Mg(2+). Lys14 contacts ATP. Arg92 provides a ligand contact to substrate. Asp149 (proton donor/acceptor) is an active-site residue. Residues 209–213 (HLGNG), 283–285 (DAR), and 331–335 (GLGEN) contribute to the ATP site. Glu385 is a Mg(2+) binding site.

This sequence belongs to the acetokinase family. Homodimer. The cofactor is Mg(2+). Mn(2+) is required as a cofactor.

The protein localises to the cytoplasm. The catalysed reaction is acetate + ATP = acetyl phosphate + ADP. It participates in metabolic intermediate biosynthesis; acetyl-CoA biosynthesis; acetyl-CoA from acetate: step 1/2. In terms of biological role, catalyzes the formation of acetyl phosphate from acetate and ATP. Can also catalyze the reverse reaction. The sequence is that of Acetate kinase from Helicobacter pylori (strain Shi470).